The sequence spans 364 residues: Trans-enoyl reductase traG (364 aa).

V51–K54 serves as a coordination point for NADP(+). Position 136 to 143 (L136 to L143) interacts with substrate. Residues S176 to T179, S199 to N202, Y217, and L264 to E265 contribute to the NADP(+) site. Residue A286–F290 participates in substrate binding. M355 to S356 is a binding site for NADP(+).

It belongs to the zinc-containing alcohol dehydrogenase family. In terms of assembly, monomer.

Its pathway is secondary metabolite biosynthesis. Functionally, trans-enoyl reductase; part of the tra gene cluster that produces terrestric acid. The clavatol biosynthesis cluster cla and the terrestric acid cluster tra are both involved in the production of peniphenones and penilactones. The non-reducing PKS claF is responsible for the formation of clavatol from successive condensations of 3 malonyl-CoA units, presumably with a simple acetyl-CoA starter unit, and 2 methylation steps. The esterase claE probably collaborates with claF by catalyzing the hydrolysis of ACP-bound acyl intermediates to free the ACP from stalled intermediates. The clavatol oxidase claD then converts clavatol to hydroxyclavatol. Spontaneous dehydration of hydroxyclavatol leads to the accumulation of the highly active ortho-quinone methide. On the other hand, the PKS-NRPS hybrid traA is involved in the formation of crustosic acid, with the help of traB and traD. The polyketide synthase module (PKS) of traA is responsible for the synthesis of the polyketide backbone via the condensation of an acetyl-CoA starter unit with 3 malonyl-CoA units. The downstream nonribosomal peptide synthetase (NRPS) module then amidates the carboxyl end of the polyketide with L-malic acid. Because traA lacks a designated enoylreductase (ER) domain, the required activity is provided the enoyl reductase traG. Crustosic acid undergoes decarboxylation and isomerization to the terrestric acid, catalyzed by the 2-oxoglutarate-dependent dioxygenase traH. Both acids are further converted to the 2 gamma-butyrolactones (R)-5-methyltetronic acid and (S)-5-carboxylmethyltetronic acid, with involvement of the cytochrome P450 monooxygenase claJ. Spontaneous addition of the methide to these gamma-butyrolactones leads to peniphenone D and penilactone D, which undergo again stereospecific attacking by methide to give penilactones A and B. This Penicillium crustosum (Blue mold fungus) protein is Trans-enoyl reductase traG.